A 310-amino-acid polypeptide reads, in one-letter code: Carbamate kinase-like protein YqeA (310 aa).

The protein belongs to the carbamate kinase family.

This Escherichia coli (strain K12) protein is Carbamate kinase-like protein YqeA (yqeA).